The primary structure comprises 467 residues: Glutamate--tRNA ligase (467 aa).

The 'HIGH' region signature appears at 10 to 20 (PSPTGHLHIGG). Residues cysteine 99, cysteine 101, cysteine 126, and glutamate 128 each contribute to the Zn(2+) site. The short motif at 236–240 (RLSKR) is the 'KMSKS' region element. Lysine 239 lines the ATP pocket.

The protein belongs to the class-I aminoacyl-tRNA synthetase family. Glutamate--tRNA ligase type 1 subfamily. Monomer. Zn(2+) serves as cofactor.

It is found in the cytoplasm. It carries out the reaction tRNA(Glu) + L-glutamate + ATP = L-glutamyl-tRNA(Glu) + AMP + diphosphate. Catalyzes the attachment of glutamate to tRNA(Glu) in a two-step reaction: glutamate is first activated by ATP to form Glu-AMP and then transferred to the acceptor end of tRNA(Glu). The protein is Glutamate--tRNA ligase of Desulfosudis oleivorans (strain DSM 6200 / JCM 39069 / Hxd3) (Desulfococcus oleovorans).